The primary structure comprises 92 residues: Small ribosomal subunit protein uS19 (92 aa).

The protein belongs to the universal ribosomal protein uS19 family.

Functionally, protein S19 forms a complex with S13 that binds strongly to the 16S ribosomal RNA. The sequence is that of Small ribosomal subunit protein uS19 from Clostridium botulinum (strain Eklund 17B / Type B).